A 184-amino-acid polypeptide reads, in one-letter code: VAPKPIVDIDGKPVLYGVDYFVVSAIWGAGGGGLTVYGPGNKKKCPLSVVQDPFDNGEPIIFSAIKNVKDNIVFESVDLNVKFNITINCNETTAWKVDRFPGVIGWTVTLGGEKGYHGFESTHSMFKIKKAGLPFSYKFHFCPSYPRTRLIPCNNVDIFFDKYRIRRLILTNDAKEFVFIKTNR.

An intrachain disulfide couples C45 to C89. N-linked (GlcNAc...) asparagine glycans are attached at residues N84 and N90. C142 and C153 form a disulfide bridge.

The protein belongs to the protease inhibitor I3 (leguminous Kunitz-type inhibitor) family.

The protein localises to the secreted. Its subcellular location is the extracellular space. This Carica papaya (Papaya) protein is Latex serine proteinase inhibitor.